The sequence spans 948 residues: MAQQYQPGQRWISDSEAELGLGTVLAQDGRLLTVLYPATGDTRQYALRNAPLTRVRFSPGDSITHFEGWKMTVQEVDDVDGLLVYHGLNGQHEQVTLPETQLSNFIQFRLASDRLFAGQIDPLAWFSLRYHTLEHTSRQLQSSLWGLGGVRAQPIAHQLHIAREVADRIAPRVLLADEVGLGKTIEAGLVIHRQLLSGRASRVLILVPENLQHQWLVEMRRRFNLQVALFDEERFIESDATNPFEDTQLALVALEWLVDDEKAQDALFAAGWDLLVVDEAHHLVWHEDKASAEYSLVEQLAEVIPGVLLLTATPEQLGQDSHFARLRLLDPNRFHDLHAFRAESENYRPVAEAVQELLDKGRLSPKAHETIQGFLGNEGEALLTAVNDGDTEASARLVRELLDRHGTGRVLFRNTRAAVQGFPERKLHAYPLPNPDEYMELPLGEHAELYPEVSFQSQPDVEEEHRWWRFDPRVEWLIDQLKMLKRTKVLVICAHAETAMDLEDALRVRSGIPATVFHEGMNILERDRAAAYFADEEFGAQVLICSEIGSEGRNFQFSHHLVLFDLPSHPDLLEQRIGRLDRIGQKHVIELHVPYLETSPQERLFQWYHEALNAFLNTCPTGNALQHQFGPRLLPLLENADDGEWQALIDEARAERERLEQELHTGRDRLLELNSGGAGEGDALVEDILEQDDQFALPIYMETLFDAFGIDSEDHSENALILKPSEKMLDASFPLGDDEGVTITYDRNQALSREDMQFITWEHPMVQGGMDLVLSGSMGNTAVALIKNKALKPGTVLLELLYVSEVVAPRSLQLGRYLPPAALRCLLDANGNDLSGRVTFETLNDQLESVPRASANKFIQAQRDQLTPRINAGEEKITPRHAERVAEAKRRLAADTDEELARLTALQAVNPTVRDSELVALRTQREQGLAMLDKAALRLEAIRVLVAG.

One can recognise a Helicase ATP-binding domain in the interval 164–332; sequence EVADRIAPRV…FARLRLLDPN (169 aa). Position 177–184 (177–184) interacts with ATP; that stretch reads DEVGLGKT. Residues 278-281 carry the DEAH box motif; the sequence is DEAH. In terms of domain architecture, Helicase C-terminal spans 473–627; the sequence is RVEWLIDQLK…TCPTGNALQH (155 aa).

Belongs to the SNF2/RAD54 helicase family. RapA subfamily. In terms of assembly, interacts with the RNAP. Has a higher affinity for the core RNAP than for the holoenzyme. Its ATPase activity is stimulated by binding to RNAP.

Functionally, transcription regulator that activates transcription by stimulating RNA polymerase (RNAP) recycling in case of stress conditions such as supercoiled DNA or high salt concentrations. Probably acts by releasing the RNAP, when it is trapped or immobilized on tightly supercoiled DNA. Does not activate transcription on linear DNA. Probably not involved in DNA repair. The sequence is that of RNA polymerase-associated protein RapA from Pseudomonas fluorescens (strain SBW25).